The following is a 475-amino-acid chain: GDP-fucose protein O-fucosyltransferase 3 (475 aa).

The Cytoplasmic segment spans residues 1–8; that stretch reads MVRMRRKR. Residues 9–29 traverse the membrane as a helical; Signal-anchor for type II membrane protein segment; it reads LWASCICFAAFFFLLVTLQVI. At 30 to 475 the chain is on the lumenal side; sequence TELGNSENKA…QEFWMLVFKQ (446 aa). 3 N-linked (GlcNAc...) asparagine glycosylation sites follow: Asn107, Asn165, and Asn315. An intrachain disulfide couples Cys386 to Cys389. Asn462 carries an N-linked (GlcNAc...) asparagine glycan.

It belongs to the glycosyltransferase 10 family.

It localises to the endoplasmic reticulum membrane. The enzyme catalyses L-threonyl-[protein] + GDP-beta-L-fucose = 3-O-(alpha-L-fucosyl)-L-threonyl-[protein] + GDP + H(+). It carries out the reaction L-seryl-[protein] + GDP-beta-L-fucose = 3-O-(alpha-L-fucosyl)-L-seryl-[protein] + GDP + H(+). It functions in the pathway protein modification; protein glycosylation. Functionally, protein O-fucosyltransferase that specifically catalyzes O-fucosylation of serine or threonine residues in EMI domains of target proteins. Attaches fucose through an O-glycosidic linkage. O-fucosylation of EMI domain-containing proteins may be required for facilitating protein folding and secretion. This Gallus gallus (Chicken) protein is GDP-fucose protein O-fucosyltransferase 3 (FUT10).